The primary structure comprises 368 residues: uncharacterized protein (368 aa).

In terms of biological role, might be involved in sporulation. This is an uncharacterized protein from Brachyspira hyodysenteriae (strain ATCC 49526 / WA1).